Consider the following 460-residue polypeptide: Nitrogenase iron-iron protein beta chain (460 aa).

Residues cysteine 20, cysteine 45, cysteine 104, and serine 143 each coordinate [8Fe-7S] cluster.

Belongs to the NifD/NifK/NifE/NifN family. In terms of assembly, hexamer of two alpha, two beta, and two delta chains. [8Fe-7S] cluster is required as a cofactor.

The catalysed reaction is N2 + 8 reduced [2Fe-2S]-[ferredoxin] + 16 ATP + 16 H2O = H2 + 8 oxidized [2Fe-2S]-[ferredoxin] + 2 NH4(+) + 16 ADP + 16 phosphate + 6 H(+). Functionally, this iron-iron protein is part of the nitrogenase complex that catalyzes the key enzymatic reactions in nitrogen fixation. Other nitrogenase complexes utilize a molybdenum-iron protein or a vanadium-iron protein. The polypeptide is Nitrogenase iron-iron protein beta chain (anfK) (Rhodobacter capsulatus (Rhodopseudomonas capsulata)).